The primary structure comprises 374 residues: Queuine tRNA-ribosyltransferase (374 aa).

The active-site Proton acceptor is Asp95. Residues 95 to 99 (DSGGF), Asp149, Gln191, and Gly218 contribute to the substrate site. Residues 249 to 255 (GVGTYRE) are RNA binding. Catalysis depends on Asp268, which acts as the Nucleophile. The RNA binding; important for wobble base 34 recognition stretch occupies residues 273-277 (TRWAR). Residues Cys306, Cys308, Cys311, and His337 each contribute to the Zn(2+) site.

Belongs to the queuine tRNA-ribosyltransferase family. Homodimer. Within each dimer, one monomer is responsible for RNA recognition and catalysis, while the other monomer binds to the replacement base PreQ1. Requires Zn(2+) as cofactor.

It catalyses the reaction 7-aminomethyl-7-carbaguanine + guanosine(34) in tRNA = 7-aminomethyl-7-carbaguanosine(34) in tRNA + guanine. Its pathway is tRNA modification; tRNA-queuosine biosynthesis. Its function is as follows. Catalyzes the base-exchange of a guanine (G) residue with the queuine precursor 7-aminomethyl-7-deazaguanine (PreQ1) at position 34 (anticodon wobble position) in tRNAs with GU(N) anticodons (tRNA-Asp, -Asn, -His and -Tyr). Catalysis occurs through a double-displacement mechanism. The nucleophile active site attacks the C1' of nucleotide 34 to detach the guanine base from the RNA, forming a covalent enzyme-RNA intermediate. The proton acceptor active site deprotonates the incoming PreQ1, allowing a nucleophilic attack on the C1' of the ribose to form the product. After dissociation, two additional enzymatic reactions on the tRNA convert PreQ1 to queuine (Q), resulting in the hypermodified nucleoside queuosine (7-(((4,5-cis-dihydroxy-2-cyclopenten-1-yl)amino)methyl)-7-deazaguanosine). This Nostoc sp. (strain PCC 7120 / SAG 25.82 / UTEX 2576) protein is Queuine tRNA-ribosyltransferase.